The sequence spans 400 residues: Exodeoxyribonuclease 7 large subunit (400 aa).

The protein belongs to the XseA family. In terms of assembly, heterooligomer composed of large and small subunits.

It is found in the cytoplasm. The catalysed reaction is Exonucleolytic cleavage in either 5'- to 3'- or 3'- to 5'-direction to yield nucleoside 5'-phosphates.. In terms of biological role, bidirectionally degrades single-stranded DNA into large acid-insoluble oligonucleotides, which are then degraded further into small acid-soluble oligonucleotides. This Clostridium perfringens (strain SM101 / Type A) protein is Exodeoxyribonuclease 7 large subunit.